Here is a 330-residue protein sequence, read N- to C-terminus: uncharacterized protein (330 aa).

10 helical membrane passes run 15 to 35 (LTLI…KGVL), 41 to 61 (FFVA…WAMG), 72 to 92 (GWGW…GFLA), 102 to 122 (LGSV…SWLF), 125 to 145 (VIGG…SLIG), 175 to 195 (LWML…PFVS), 201 to 221 (VVAT…IALV), 238 to 258 (LAYA…YLAS), 264 to 284 (SLSS…NLIL), and 286 to 306 (EQLS…IYLI). 2 EamA domains span residues 22-146 (FLWG…LIGL) and 182-308 (LSMA…LINQ).

This sequence belongs to the EamA transporter family.

The protein localises to the cell membrane. This is an uncharacterized protein from Synechocystis sp. (strain ATCC 27184 / PCC 6803 / Kazusa).